The chain runs to 374 residues: Alcohol dehydrogenase S chain (374 aa).

N-acetylserine is present on Ser2. Positions 47, 68, 98, 101, 104, 112, and 174 each coordinate Zn(2+). NAD(+) contacts are provided by residues 199-204 (GLGGVG), Asp223, Lys228, 292-294 (VGV), and Arg369.

The protein belongs to the zinc-containing alcohol dehydrogenase family. Class-I subfamily. As to quaternary structure, dimer of identical or non-identical chains of two types (E and S) coded by 2 separate genes at different loci. It depends on Zn(2+) as a cofactor.

It localises to the cytoplasm. The enzyme catalyses a primary alcohol + NAD(+) = an aldehyde + NADH + H(+). It catalyses the reaction a secondary alcohol + NAD(+) = a ketone + NADH + H(+). The chain is Alcohol dehydrogenase S chain from Equus caballus (Horse).